The chain runs to 255 residues: MSQEFLARILEQKAREVEQMKLEQIQPLRQTYRLAEFLKNHQDRLQVIAEVKKASPSLGDINLDVDIVQQAQTYEENGAVMISVLTDEVFFKGHLDYLREISSQVEIPTLNKDFIIDEKQIIRARNAGATVILLIVAALAEERLKELYDYATVLGLEVLVETHNLAELEVAHRLGAQIIGVNNRNLTTFEVDLQTSVDLAKHFKDDCLYISESAIFTRQDAERLAPYFNGILVGTALMQAENVVQRIKELQIDKG.

This sequence belongs to the TrpC family.

It carries out the reaction 1-(2-carboxyphenylamino)-1-deoxy-D-ribulose 5-phosphate + H(+) = (1S,2R)-1-C-(indol-3-yl)glycerol 3-phosphate + CO2 + H2O. It participates in amino-acid biosynthesis; L-tryptophan biosynthesis; L-tryptophan from chorismate: step 4/5. This chain is Indole-3-glycerol phosphate synthase, found in Streptococcus pneumoniae (strain Hungary19A-6).